The primary structure comprises 380 residues: Putative heat stress transcription factor B-4a (380 aa).

The tract at residues L216–V245 is hydrophobic repeat HR-A/B. Disordered stretches follow at residues P268–E296 and I314–P380. The segment covering V278–E296 has biased composition (low complexity). The Nuclear localization signal signature appears at R346–R348.

It belongs to the HSF family. Class B subfamily. In terms of assembly, homotrimer. Exhibits temperature-dependent phosphorylation.

It is found in the nucleus. Functionally, transcriptional regulator that specifically binds DNA of heat shock promoter elements (HSE). This is Putative heat stress transcription factor B-4a (HSFB4A) from Oryza sativa subsp. japonica (Rice).